The following is a 461-amino-acid chain: Coronin-1A (461 aa).

Position 2 is an N-acetylserine (Ser2). A Phosphoserine; by PKC modification is found at Ser2. WD repeat units follow at residues 13 to 63, 73 to 110, 123 to 160, 164 to 204, 207 to 251, 258 to 296, and 302 to 349; these read HVFG…LVLP, NVPMVCGHTAPVLDIAWCPHNDNVIASGSEDCSVMVWE, PVVTLEGHTKRVGIVAWHPTAQNVLLSAGCDNVILVWD, GVAV…RIIE, KGTI…ALWD, PLSLQELDTSSGVLLPFFDPDTNIVYLCGKGDSSIRYFE, and PFLH…EPIA. The span at 404-418 shows a compositional bias: basic and acidic residues; that stretch reads LRVNRGLDTGRKRTT. The interval 404 to 429 is disordered; sequence LRVNRGLDTGRKRTTPEASGAPSSDA. A Phosphothreonine; by PKC modification is found at Thr412. Thr418 carries the phosphothreonine modification. A Phosphoserine modification is found at Ser422. Residues 424-460 are a coiled coil; that stretch reads APSSDAISRLEEEMRKLQATVQELQKRLDRLEETVQA. Lys449 bears the N6-acetyllysine mark.

The protein belongs to the WD repeat coronin family. As to quaternary structure, binds actin. Post-translationally, phosphorylation at Thr-412 by PKC strongly down-regulates the association with actin. Polyubiquitinated by RNF128 with 'Lys-48'-linked chains, leading to proteasomal degradation. Expressed in brain, thymus, spleen, bone marrow and lymph node. Low in lung and gut.

The protein localises to the cytoplasm. The protein resides in the cytoskeleton. It localises to the cell cortex. It is found in the cytoplasmic vesicle. Its subcellular location is the phagosome membrane. Functionally, may be a crucial component of the cytoskeleton of highly motile cells, functioning both in the invagination of large pieces of plasma membrane, as well as in forming protrusions of the plasma membrane involved in cell locomotion. In mycobacteria-infected macrophages, its retention on the phagosomal membrane prevents fusion between phagosomes and lysosomes. In Bos taurus (Bovine), this protein is Coronin-1A (CORO1A).